The primary structure comprises 427 residues: Serine/threonine-protein kinase AFC2 (427 aa).

Positions 98–423 constitute a Protein kinase domain; sequence YKIYSKMGEG…AREALRHPFF (326 aa). Residues 104 to 112 and lysine 127 contribute to the ATP site; that span reads MGEGTFGQV. Aspartate 223 serves as the catalytic Proton acceptor.

It belongs to the protein kinase superfamily. CMGC Ser/Thr protein kinase family. Lammer subfamily.

The catalysed reaction is L-seryl-[protein] + ATP = O-phospho-L-seryl-[protein] + ADP + H(+). The enzyme catalyses L-threonyl-[protein] + ATP = O-phospho-L-threonyl-[protein] + ADP + H(+). It catalyses the reaction L-tyrosyl-[protein] + ATP = O-phospho-L-tyrosyl-[protein] + ADP + H(+). The chain is Serine/threonine-protein kinase AFC2 (AFC2) from Arabidopsis thaliana (Mouse-ear cress).